A 577-amino-acid polypeptide reads, in one-letter code: Arginine--tRNA ligase (577 aa).

A 'HIGH' region motif is present at residues 122–132 (PNVAKEMHVGH).

This sequence belongs to the class-I aminoacyl-tRNA synthetase family. Monomer.

The protein resides in the cytoplasm. The catalysed reaction is tRNA(Arg) + L-arginine + ATP = L-arginyl-tRNA(Arg) + AMP + diphosphate. The polypeptide is Arginine--tRNA ligase (Vibrio campbellii (strain ATCC BAA-1116)).